The primary structure comprises 180 residues: Beta-lactoglobulin (180 aa).

The N-terminal stretch at 1 to 18 (MKCLLLALGLALACAAQA) is a signal peptide. Disulfide bonds link cysteine 84–cysteine 178, cysteine 124–cysteine 137, and cysteine 124–cysteine 139.

This sequence belongs to the calycin superfamily. Lipocalin family. As to quaternary structure, under physiological conditions beta-lactoglobulin exists as an equilibrium mixture of monomeric and dimeric forms. Interaction with LMBR1L is controversial. Alternate disulfide bonds occur in equal amounts. Synthesized in mammary gland and secreted in milk.

The protein localises to the secreted. Functionally, primary component of whey, it binds retinol and is probably involved in the transport of that molecule. This chain is Beta-lactoglobulin (LGB), found in Bubalus bubalis (Domestic water buffalo).